A 208-amino-acid polypeptide reads, in one-letter code: MPTVDVVDLNNQVVSSVELADDVFGAEVNQSLLYEAVRQYQASLRAGTHATKVRREVSGSGKKLWKQKGTGRARIGSVRSPLWRHGATVHGPQPRDYAYKLPKKMLLGALRSALSAKVRDGELKVVQNFNFSDHKTKNAMGALSKLEAGRTVLVVDNEDNRNLELGIRNLKGVTLLATREVNPYHLLGHKSVLISEAAARKFSEALAK.

Belongs to the universal ribosomal protein uL4 family. Part of the 50S ribosomal subunit.

Its function is as follows. One of the primary rRNA binding proteins, this protein initially binds near the 5'-end of the 23S rRNA. It is important during the early stages of 50S assembly. It makes multiple contacts with different domains of the 23S rRNA in the assembled 50S subunit and ribosome. Functionally, forms part of the polypeptide exit tunnel. In Solibacter usitatus (strain Ellin6076), this protein is Large ribosomal subunit protein uL4.